Here is a 508-residue protein sequence, read N- to C-terminus: Photosystem II CP47 reaction center protein (508 aa).

Helical transmembrane passes span 21–36 (SVHI…WAGS), 101–115 (IVFS…IWHW), 140–156 (GIHL…FGAF), 203–218 (IAAG…FHLS), 237–252 (VLSS…AFVV), and 457–472 (SFAL…HGSR).

Belongs to the PsbB/PsbC family. PsbB subfamily. In terms of assembly, PSII is composed of 1 copy each of membrane proteins PsbA, PsbB, PsbC, PsbD, PsbE, PsbF, PsbH, PsbI, PsbJ, PsbK, PsbL, PsbM, PsbT, PsbX, PsbY, PsbZ, Psb30/Ycf12, at least 3 peripheral proteins of the oxygen-evolving complex and a large number of cofactors. It forms dimeric complexes. It depends on Binds multiple chlorophylls. PSII binds additional chlorophylls, carotenoids and specific lipids. as a cofactor.

It localises to the plastid. The protein localises to the chloroplast thylakoid membrane. Functionally, one of the components of the core complex of photosystem II (PSII). It binds chlorophyll and helps catalyze the primary light-induced photochemical processes of PSII. PSII is a light-driven water:plastoquinone oxidoreductase, using light energy to abstract electrons from H(2)O, generating O(2) and a proton gradient subsequently used for ATP formation. The polypeptide is Photosystem II CP47 reaction center protein (Helianthus annuus (Common sunflower)).